A 650-amino-acid polypeptide reads, in one-letter code: Chaperone protein DnaK (650 aa).

Position 200 is a phosphothreonine; by autocatalysis (T200). The span at 612–632 (GEGATAGAAAGAGAAGGQQAQ) shows a compositional bias: low complexity. A disordered region spans residues 612-650 (GEGATAGAAAGAGAAGGQQAQPQDDNVVDAEFKEVNDKK). The span at 641-650 (AEFKEVNDKK) shows a compositional bias: basic and acidic residues.

The protein belongs to the heat shock protein 70 family.

Acts as a chaperone. In Cupriavidus necator (strain ATCC 17699 / DSM 428 / KCTC 22496 / NCIMB 10442 / H16 / Stanier 337) (Ralstonia eutropha), this protein is Chaperone protein DnaK.